The primary structure comprises 79 residues: Hemoglobin subunit zeta (79 aa).

Serine 1 carries the post-translational modification N-acetylserine. One can recognise a Globin domain in the interval 1 to 79 (SLTKTXXTII…FKLLSHXFLV (79 aa)). Serine 38 and serine 53 each carry phosphoserine. Histidine 59 is a heme b binding site.

It belongs to the globin family. As to quaternary structure, heterotetramer of two zeta chains and two epsilon chains.

In terms of biological role, the zeta chain is an alpha-type chain of mammalian embryonic hemoglobin. This chain is Hemoglobin subunit zeta, found in Notamacropus eugenii (Tammar wallaby).